Here is an 822-residue protein sequence, read N- to C-terminus: MMDYDDARGERPRLLVVANRLPVSAKRTGENSWSLEMSPGGLVSGLLGITSQFDTKWVGWPGVDVHDEIEKNALTESLAEMKCIPVFLNGVFDQYYNGYCNGILWPILHHMGLPQEDQHDTNQTFETQYDAYKKANRMFLDVIIDNYEEGDIVWCHDYHLMFLPQYLKEYNNKIKVGWFLHSPFPSSEVYKTLPSRSELLRAILAADLLGFHTYDFARHFLSTCTRILGVEGTHEGVVYQGRVTRVAVFPIGIDPDRFIRTCKLPEVTQQMNELQEKFAGKKVILGVDRLDMIKGIPQKYLAFEKFLEENPYWRDKVVLVQIAVPTRNDVPEYRKLKSQVHGLVGRINGRFGSVSSLPIHHLDCSVDFNYLCAIYAIADVMLVTSLRDGMNLVSYEFVACQEAKKGVLVLSEFAGAGQSLGVGALIVNPWDVTEVSSAIKEALNMPAEERETRHRSNFQYVCTHSAEKWGLDFMSELNGIIPESEMQMRKIPLQLPEQDVIQQYSQSNNRLIILGFFGTLAEPMNSGTKEMDLKLNPELKGTLKALCNDPKTTVVVLSRSGKNILNKNFGESNIWLAAENGMFEKQTTGEWVTNMPQNVNLDWVDGVKNVFKYFTDRTPRSYFEASETSLVWNYEYADVEFGRAQARDLLQYLWAGPISNASVDVVRGNHSVEVHAIGETKGAAIGRILGEIVHRKSMTTPIDFVFCSGYFLEKDEDIYTFFESKILSSKSPNGLDLKKENYFSAAIGQARTKARYVIDSAHGVVDLLHKLAVVADTTMTDSFSDSEIYEPRDANANENSKRWINSVRRRKVEIGDTGQIGM.

The interval 12 to 479 (PRLLVVANRL…GLDFMSELNG (468 aa)) is glycosyltransferase.

It in the N-terminal section; belongs to the glycosyltransferase 20 family. The protein in the C-terminal section; belongs to the trehalose phosphatase family.

It catalyses the reaction D-glucose 6-phosphate + UDP-alpha-D-glucose = alpha,alpha-trehalose 6-phosphate + UDP + H(+). The polypeptide is Probable alpha,alpha-trehalose-phosphate synthase [UDP-forming] 2 (TPS2) (Arabidopsis thaliana (Mouse-ear cress)).